Reading from the N-terminus, the 638-residue chain is LIM domain kinase 2 (638 aa).

LIM zinc-binding domains lie at 12 to 63 (CRGC…CHKD) and 72 to 124 (CHGC…CGKC). The 88-residue stretch at 152–239 (LISMPATTEC…TLQLLIEHDP (88 aa)) folds into the PDZ domain. Threonine 210 carries the phosphothreonine modification. Polar residues predominate over residues 257 to 266 (MQSSGHTLML). A disordered region spans residues 257 to 304 (MQSSGHTLMLSTLDAKENQEGTLRRRSLRRSNSISKSPGPSSPKEPLL). Over residues 270–279 (DAKENQEGTL) the composition is skewed to basic and acidic residues. Residues 286-304 (RSNSISKSPGPSSPKEPLL) show a composition bias toward low complexity. Serine 293 and serine 298 each carry phosphoserine. The 278-residue stretch at 331 to 608 (LIHGEVLGKG…DSFEALSLFL (278 aa)) folds into the Protein kinase domain. Residues 337–345 (LGKGFFGQA) and lysine 360 contribute to the ATP site. The active site involves aspartate 451. Threonine 505 is modified (phosphothreonine; by ROCK1 and CDC42BP).

The protein belongs to the protein kinase superfamily. TKL Ser/Thr protein kinase family. Binds ROCK1 and MARF1. Interacts with NISCH. Phosphorylated on serine and/or threonine residues by ROCK1. As to expression, found in various tissues at moderate levels, except for testis, which shows very low expression.

It is found in the cytoplasm. The protein localises to the nucleus. The protein resides in the perinuclear region. It localises to the cytoskeleton. Its subcellular location is the spindle. It is found in the microtubule organizing center. The protein localises to the centrosome. The catalysed reaction is L-seryl-[protein] + ATP = O-phospho-L-seryl-[protein] + ADP + H(+). It carries out the reaction L-threonyl-[protein] + ATP = O-phospho-L-threonyl-[protein] + ADP + H(+). Functionally, serine/threonine-protein kinase that plays an essential role in the regulation of actin filament dynamics. Acts downstream of several Rho family GTPase signal transduction pathways. Involved in astral microtubule organization and mitotic spindle orientation during early stages of mitosis by mediating phosphorylation of TPPP. Displays serine/threonine-specific phosphorylation of myelin basic protein and histone (MBP) in vitro. Suppresses ciliogenesis via multiple pathways; phosphorylation of CFL1, directional trafficking of ciliary vesicles to the ciliary base, and by facilitating YAP1 nuclear localization where it acts as a transcriptional corepressor of the TEAD4 target genes AURKA and PLK1. This Rattus norvegicus (Rat) protein is LIM domain kinase 2 (Limk2).